A 637-amino-acid polypeptide reads, in one-letter code: tRNA uridine 5-carboxymethylaminomethyl modification enzyme MnmG (637 aa).

FAD is bound by residues 15 to 20 (GAGHAG), Ile127, and Ser182. NAD(+) is bound at residue 276-290 (GPRYCPSIEDKIVRF). An FAD-binding site is contributed by Gln373.

This sequence belongs to the MnmG family. In terms of assembly, homodimer. Heterotetramer of two MnmE and two MnmG subunits. FAD serves as cofactor.

The protein resides in the cytoplasm. NAD-binding protein involved in the addition of a carboxymethylaminomethyl (cmnm) group at the wobble position (U34) of certain tRNAs, forming tRNA-cmnm(5)s(2)U34. This is tRNA uridine 5-carboxymethylaminomethyl modification enzyme MnmG from Streptococcus pneumoniae (strain Hungary19A-6).